The sequence spans 354 residues: Protein YGP1 (354 aa).

The first 19 residues, 1 to 19, serve as a signal peptide directing secretion; sequence MKFQVVLSALLACSSAVVA. Residues 20-37 constitute a propeptide that is removed on maturation; that stretch reads SPIENLFKYRAVKASHSK. N-linked (GlcNAc...) asparagine glycans are attached at residues asparagine 40, asparagine 50, asparagine 53, asparagine 58, asparagine 61, asparagine 65, asparagine 87, asparagine 94, asparagine 100, asparagine 106, asparagine 118, asparagine 172, asparagine 239, and asparagine 286. The Asparaginase/glutaminase domain maps to 50–354; the sequence is NSSNVTYANG…SKSALESIFP (305 aa).

It to yeast sporulation-specific protein SPS100. In terms of processing, extensively N-glycosylated.

It localises to the secreted. Functionally, may be involved in cellular adaptations prior to stationary phase. This chain is Protein YGP1 (YGP1), found in Saccharomyces cerevisiae (strain ATCC 204508 / S288c) (Baker's yeast).